Here is a 579-residue protein sequence, read N- to C-terminus: Tricyclene synthase 0e23, chloroplastic (579 aa).

The N-terminal 66 residues, 1 to 66, are a transit peptide targeting the chloroplast; sequence MAFCISYLGA…ALCLNAHSTS (66 aa). 3 N-linked (GlcNAc...) asparagine glycosylation sites follow: asparagine 27, asparagine 204, and asparagine 317. Positions 336 and 340 each coordinate Mg(2+). A DDXXD motif motif is present at residues 336-340; sequence DDIFD. Asparagine 382 and asparagine 463 each carry an N-linked (GlcNAc...) asparagine glycan. The Mg(2+) site is built by asparagine 480 and glutamate 488. The N-linked (GlcNAc...) asparagine glycan is linked to asparagine 507.

The protein belongs to the terpene synthase family. Tpsg subfamily. It depends on Mg(2+) as a cofactor. Requires Mn(2+) as cofactor. In terms of tissue distribution, accumulates in flowers; mostly expressed in both upper and lower petal lobes, and, to a lower extent, in tube and stamens.

It localises to the plastid. Its subcellular location is the chloroplast stroma. The catalysed reaction is (2E)-geranyl diphosphate = tricyclene + diphosphate. It catalyses the reaction (2E)-geranyl diphosphate = (E)-beta-ocimene + diphosphate. It functions in the pathway secondary metabolite biosynthesis; terpenoid biosynthesis. Contributes to floral scent emission. The sequence is that of Tricyclene synthase 0e23, chloroplastic (0e23) from Antirrhinum majus (Garden snapdragon).